The primary structure comprises 730 residues: Cyclin-T2 (730 aa).

Residues 1-300 (MASGRGASSR…SVTGVPTNPS (300 aa)) form an interaction with MDFIC and MDFI region. The Cyclin N-terminal domain occupies 12-147 (FFTREQLENT…IMLQTLGFEI (136 aa)). The interaction with POLR2A stretch occupies residues 250-300 (RLKKIRNWRANQAARKPKVDGQVSETPLLGSSLVQNSILVDSVTGVPTNPS). Composition is skewed to polar residues over residues 341–350 (TSYGLSSHQE) and 360–389 (TEQL…SISL). The segment at 341-430 (TSYGLSSHQE…GPISTTPGII (90 aa)) is disordered. Residues 398–412 (DKISDHSSVKQEYTH) show a composition bias toward basic and acidic residues. K407 participates in a covalent cross-link: Glycyl lysine isopeptide (Lys-Gly) (interchain with G-Cter in SUMO2). The residue at position 480 (S480) is a Phosphoserine. A disordered region spans residues 497–652 (DKKEKSGSLK…SSSSSSSSVK (156 aa)). Composition is skewed to basic and acidic residues over residues 517–543 (SASK…EGSG) and 552–565 (ISRD…EHPS). A compositionally biased stretch (basic residues) spans 566 to 578 (SRHHTSSHKHSHS). Residues 579–588 (HSGSSSGGSK) show a composition bias toward low complexity. S601 is modified (phosphoserine). 2 stretches are compositionally biased toward low complexity: residues 606–616 (SSDGISSSSSS) and 637–652 (SSKS…SSVK).

The protein belongs to the cyclin family. Cyclin C subfamily. In terms of assembly, interacts with CDK9 to form P-TEFb. Interacts with POLR2A (via the C-terminal domain (CTD)); mediates transcriptional activity. Interacts with HEXIM1; mediates formation of a tripartite complex with KPNA2. Interacts with HEXIM2. Interacts with PKN1; enhances MYOD1-dependent transcription. P-TEFB complex interacts with RB1; promotes phosphorylation of RB1. P-TEFB complex interacts with MYOD1; promotes the transcriptional activity of MYOD1 through its CDK9-mediated phosphorylation. Interacts with MDFI and MDFIC. Interacts with MON1B; down-regulates CCNT2-mediated activation of viral promoters during herpes simplex virus 1/HHV-1 infection. As to quaternary structure, (Microbial infection) Interacts with HIV-2 and SIV Tat. Does not bind efficiently to the transactivation domain of the HIV-1 Tat. Ubiquitously expressed.

The protein localises to the cytoplasm. The protein resides in the perinuclear region. It is found in the nucleus. Regulatory subunit of the cyclin-dependent kinase pair (CDK9/cyclin T) complex, also called positive transcription elongation factor B (P-TEFB), which is proposed to facilitate the transition from abortive to production elongation by phosphorylating the CTD (carboxy-terminal domain) of the large subunit of RNA polymerase II (RNAP II). The activity of this complex is regulated by binding with 7SK snRNA. Plays a role during muscle differentiation; P-TEFB complex interacts with MYOD1; this tripartite complex promotes the transcriptional activity of MYOD1 through its CDK9-mediated phosphorylation and binds the chromatin of promoters and enhancers of muscle-specific genes; this event correlates with hyperphosphorylation of the CTD domain of RNA pol II. In addition, enhances MYOD1-dependent transcription through interaction with PKN1. Involved in early embryo development. Its function is as follows. (Microbial infection) Promotes transcriptional activation of early and late herpes simplex virus 1/HHV-1 promoters. The sequence is that of Cyclin-T2 from Homo sapiens (Human).